We begin with the raw amino-acid sequence, 142 residues long: Glutamate-rich protein 2 (142 aa).

2 disordered regions span residues 1–55 (MSKN…HAPL) and 104–142 (EKAQNLEEDDDESEEDNSESEGESTEDPSEESSDECEDG). The span at 9–27 (EQEKNNEHCPEDINDKLSE) shows a compositional bias: basic and acidic residues. Residues 28–43 (STDDDGEDTSDEDKEE) show a composition bias toward acidic residues. The span at 44 to 53 (DSNPNKDTHA) shows a compositional bias: basic and acidic residues. Residues 109–142 (LEEDDDESEEDNSESEGESTEDPSEESSDECEDG) are compositionally biased toward acidic residues.

This Bos taurus (Bovine) protein is Glutamate-rich protein 2 (ERICH2).